We begin with the raw amino-acid sequence, 403 residues long: Zinc metalloproteinase nas-8 (403 aa).

A signal peptide spans 1-29; it reads MRRNDLLNNKITIFLSSLSLFVIIIPIYA. A propeptide spanning residues 30-111 is cleaved from the precursor; it reads AEKDLLPPST…DPKNSESLRR (82 aa). The Peptidase M12A domain occupies 112 to 307; that stretch reads NGVITGTRKW…LKMNLMYQCS (196 aa). 5 disulfides stabilise this stretch: Cys154–Cys306, Cys176–Cys195, Cys338–Cys372, Cys345–Cys365, and Cys352–Cys369. Zn(2+) is bound at residue His203. Glu204 is a catalytic residue. Residues His207 and His213 each contribute to the Zn(2+) site. A ShKT domain is found at 338 to 372; sequence CRDRTNLCWRWIDRCKSFFFEQIMKEFCSLSCGYC. Asn386 carries N-linked (GlcNAc...) asparagine glycosylation.

The cofactor is Zn(2+).

It is found in the secreted. The catalysed reaction is Hydrolysis of peptide bonds in substrates containing five or more amino acids, preferentially with Ala in P1', and Pro in P2'.. Metalloprotease. This is Zinc metalloproteinase nas-8 (nas-8) from Caenorhabditis elegans.